The chain runs to 310 residues: Putative olfactory receptor 7A2 (310 aa).

Over 1–26 (MVKAGNETQISEFLLLGFSEKQELQP) the chain is Extracellular. Residue Asn-6 is glycosylated (N-linked (GlcNAc...) asparagine). Residues 27 to 47 (FLFGLFLSMYLVTVLGNLLII) traverse the membrane as a helical segment. Over 48–55 (LAAISDSC) the chain is Cytoplasmic. The helical transmembrane segment at 56–76 (LHTPMYFFLSNLSFVDICFAS) threads the bilayer. The Extracellular portion of the chain corresponds to 77–100 (TMVPKMLVNIQTQSKVITYAGCIT). Cys-98 and Cys-190 are oxidised to a cystine. A helical membrane pass occupies residues 101–121 (QMCFFVLFIVLDSLLLTVMAY). Residues 122–140 (DQFVAICHPLHYTVIMSPQ) are Cytoplasmic-facing. The helical transmembrane segment at 141 to 161 (LCGLLVLVSWIMSVLNSMLQS) threads the bilayer. At 162 to 198 (LVTLQLSFCTDLEIPHFFCELNEMIHLACSDTFVNNM) the chain is on the extracellular side. A helical transmembrane segment spans residues 199-218 (VMHFAAVLLDGGPLVGILYS). The Cytoplasmic segment spans residues 219–238 (YCRIVSSIRAISSTQGKYKA). A helical membrane pass occupies residues 239 to 259 (LSTCASHLSVVSIFYGTGLGV). Residues 260–272 (YLSSTMTQNLHST) are Extracellular-facing. A helical transmembrane segment spans residues 273–293 (AVASVMYTVVTPMLNPFIYSL). Topologically, residues 294-310 (RNKDIKGALTQFFRGKQ) are cytoplasmic.

The protein belongs to the G-protein coupled receptor 1 family.

The protein resides in the cell membrane. Its function is as follows. Odorant receptor. This Homo sapiens (Human) protein is Putative olfactory receptor 7A2 (OR7A2P).